A 461-amino-acid polypeptide reads, in one-letter code: Serine incorporator 5 (461 aa).

Residues 1-36 lie on the Extracellular side of the membrane; it reads MSARCCAGQLACCCGSAGCSLCCGCCPKFRQSRTTR. A helical membrane pass occupies residues 37–57; it reads FMYLFYFILVIALCCVMMTPS. The Cytoplasmic segment spans residues 58–90; sequence VMKQVKDHIPFFEEFCKKTQAGGDACENLVGYS. The helical transmembrane segment at 91-111 threads the bilayer; sequence AVYRVCFGMACFFALFCLLTL. The Extracellular portion of the chain corresponds to 112 to 125; the sequence is KVNNSKSCRAYIHN. Asn114 carries N-linked (GlcNAc...) asparagine glycosylation. Residues 126-146 form a helical membrane-spanning segment; sequence GFWFFKLLLLGAMCSGAFFIP. Residues 147-157 lie on the Cytoplasmic side of the membrane; sequence DQETFLKVWRY. The helical transmembrane segment at 158–178 threads the bilayer; that stretch reads VGAGGSFLFICIQLLLIVQFA. Residues 179–200 are Extracellular-facing; it reads HKWNKNWTAGTVRNKLWYASLS. Asn184 carries N-linked (GlcNAc...) asparagine glycosylation. Residues 201–221 form a helical membrane-spanning segment; that stretch reads LVTLIMYSVAVGGLALMAVFY. The Cytoplasmic portion of the chain corresponds to 222–231; it reads TQWDDCMDNK. The chain crosses the membrane as a helical span at residues 232-252; sequence ILLGVHGGLCVLISLVAISPC. Topologically, residues 253–260 are extracellular; that stretch reads VQNRQPHS. Residues 261–281 form a helical membrane-spanning segment; sequence GLLQSGLISCYVTYLTFSALT. Topologically, residues 282–312 are cytoplasmic; the sequence is SKPEKKVLDEHGKNVTICAPDFGQDLHRDEN. A helical membrane pass occupies residues 313 to 333; that stretch reads MVTWLGTLLLIVCISYSCLTS. The Extracellular portion of the chain corresponds to 334 to 392; it reads TTRSSSDALQSRYGAPELEVARCCFCFGPDGEDTEEQQNVKKGPRVIYDEKKGTVYSYS. Residues 393–413 traverse the membrane as a helical segment; it reads YFHFVFFLASLYVMMTLTSWF. Topologically, residues 414–422 are cytoplasmic; it reads HYENATIKT. The helical transmembrane segment at 423-443 threads the bilayer; sequence FFSGWSVFWVKMASCWMCVLL. Residues 444 to 461 are Extracellular-facing; the sequence is YLQTLVAPLCCPSRQFSV.

It belongs to the TDE1 family.

The protein resides in the cell membrane. It catalyses the reaction a 1,2-diacyl-sn-glycero-3-phospho-L-serine(in) = a 1,2-diacyl-sn-glycero-3-phospho-L-serine(out). It carries out the reaction a 1,2-diacyl-sn-glycero-3-phosphocholine(in) = a 1,2-diacyl-sn-glycero-3-phosphocholine(out). The enzyme catalyses a 1,2-diacyl-sn-glycero-3-phosphoethanolamine(in) = a 1,2-diacyl-sn-glycero-3-phosphoethanolamine(out). Functionally, restriction factor required to restrict infectivity of gammaretroviruses: acts by inhibiting an early step of viral infection. Impairs the penetration of the viral particle into the cytoplasm. Non-ATP-dependent, non-specific lipid transporter for phosphatidylserine, phosphatidylcholine, and phosphatidylethanolamine. Functions as a scramblase that flips lipids in both directions across the membrane. Phospholipid scrambling results in gammaretroviral surface exposure of phosphatidylserine and loss of membrane asymmetry, which leads to loss of infectivity. Enhances the incorporation of serine into phosphatidylserine and sphingolipids. May play a role in providing serine molecules for the formation of myelin glycosphingolipids in oligodendrocytes. The protein is Serine incorporator 5 (Serinc5) of Mus musculus (Mouse).